Consider the following 181-residue polypeptide: Probable pyruvoyl-dependent arginine decarboxylase (181 aa).

At Ser-43 the chain carries Pyruvic acid (Ser).

It belongs to the PdaD family. Pyruvate serves as cofactor.

The catalysed reaction is L-arginine + H(+) = agmatine + CO2. The sequence is that of Probable pyruvoyl-dependent arginine decarboxylase from Chlorobaculum parvum (strain DSM 263 / NCIMB 8327) (Chlorobium vibrioforme subsp. thiosulfatophilum).